A 60-amino-acid polypeptide reads, in one-letter code: UPF0434 protein YcaR (60 aa).

It belongs to the UPF0434 family.

This Salmonella arizonae (strain ATCC BAA-731 / CDC346-86 / RSK2980) protein is UPF0434 protein YcaR.